Reading from the N-terminus, the 434-residue chain is 5'-deoxyadenosine deaminase (434 aa).

Residues histidine 63 and histidine 65 each contribute to the Zn(2+) site. Positions 92 and 184 each coordinate substrate. Position 211 (histidine 211) interacts with Zn(2+). Residues glutamate 214 and aspartate 299 each contribute to the substrate site. Residue aspartate 299 participates in Zn(2+) binding.

This sequence belongs to the metallo-dependent hydrolases superfamily. MTA/SAH deaminase family. In terms of assembly, homotetramer. Zn(2+) is required as a cofactor.

The catalysed reaction is 5'-deoxyadenosine + H2O + H(+) = 5'-deoxyinosine + NH4(+). It carries out the reaction S-adenosyl-L-homocysteine + H2O + H(+) = S-inosyl-L-homocysteine + NH4(+). The enzyme catalyses S-methyl-5'-thioadenosine + H2O + H(+) = S-methyl-5'-thioinosine + NH4(+). It catalyses the reaction adenosine + H2O + H(+) = inosine + NH4(+). It participates in amino-acid biosynthesis; S-adenosyl-L-methionine biosynthesis. Its function is as follows. Catalyzes the deamination of three SAM-derived enzymatic products, namely 5'-deoxyadenosine, S-adenosyl-L-homocysteine, and 5'-methylthioadenosine, to produce the inosine analogs. Can also deaminate adenosine. The preferred substrate for this enzyme is 5'-deoxyadenosine, but all these substrates are efficiently deaminated. Likely functions in a S-adenosyl-L-methionine (SAM) recycling pathway from S-adenosyl-L-homocysteine (SAH) produced from SAM-dependent methylation reactions. May also be involved in the recycling of 5'-deoxyadenosine, whereupon the 5'-deoxyribose moiety of 5'-deoxyinosine is further metabolized to deoxyhexoses used for the biosynthesis of aromatic amino acids in methanogens. This Methanococcoides burtonii (strain DSM 6242 / NBRC 107633 / OCM 468 / ACE-M) protein is 5'-deoxyadenosine deaminase.